We begin with the raw amino-acid sequence, 226 residues long: Probable functional amyloid protease FapD (226 aa).

The first 18 residues, 1–18, serve as a signal peptide directing secretion; sequence MRTLILSLLLLVDLTTQA. One can recognise a Peptidase C39 domain in the interval 50–180; the sequence is QKTDFSCGAA…KGWNGIVFAV (131 aa). Cysteine 56 is an active-site residue.

The protein belongs to the FapD family.

The protein resides in the periplasm. Probable protease that might be involved in processing fibril precursors. Upon overexpression of the endogenous six-gene locus (fapA-fapF), cells form large clumps during liquid growth, make large amounts of biofilm and produce amyloid fibrils. This is Probable functional amyloid protease FapD from Pseudomonas aeruginosa (strain ATCC 15692 / DSM 22644 / CIP 104116 / JCM 14847 / LMG 12228 / 1C / PRS 101 / PAO1).